The chain runs to 596 residues: Aspartate--tRNA(Asp/Asn) ligase (596 aa).

Glutamate 172 is an L-aspartate binding site. The segment at 196–199 is aspartate; the sequence is QLFK. Arginine 218 contacts L-aspartate. ATP contacts are provided by residues 218-220 and glutamine 227; that span reads RDE. Histidine 455 contributes to the L-aspartate binding site. Glutamate 489 contributes to the ATP binding site. Arginine 496 provides a ligand contact to L-aspartate. 541-544 contacts ATP; that stretch reads GLDR.

Belongs to the class-II aminoacyl-tRNA synthetase family. Type 1 subfamily. As to quaternary structure, homodimer.

It is found in the cytoplasm. The catalysed reaction is tRNA(Asx) + L-aspartate + ATP = L-aspartyl-tRNA(Asx) + AMP + diphosphate. Its function is as follows. Aspartyl-tRNA synthetase with relaxed tRNA specificity since it is able to aspartylate not only its cognate tRNA(Asp) but also tRNA(Asn). Reaction proceeds in two steps: L-aspartate is first activated by ATP to form Asp-AMP and then transferred to the acceptor end of tRNA(Asp/Asn). This chain is Aspartate--tRNA(Asp/Asn) ligase, found in Bordetella avium (strain 197N).